A 370-amino-acid polypeptide reads, in one-letter code: Histidinol-phosphate aminotransferase (370 aa).

N6-(pyridoxal phosphate)lysine is present on Lys-230.

The protein belongs to the class-II pyridoxal-phosphate-dependent aminotransferase family. Histidinol-phosphate aminotransferase subfamily. In terms of assembly, homodimer. Pyridoxal 5'-phosphate is required as a cofactor.

It carries out the reaction L-histidinol phosphate + 2-oxoglutarate = 3-(imidazol-4-yl)-2-oxopropyl phosphate + L-glutamate. It functions in the pathway amino-acid biosynthesis; L-histidine biosynthesis; L-histidine from 5-phospho-alpha-D-ribose 1-diphosphate: step 7/9. In Leptospira interrogans serogroup Icterohaemorrhagiae serovar Lai (strain 56601), this protein is Histidinol-phosphate aminotransferase.